The primary structure comprises 365 residues: Leu/Ile/Val/Thr-binding protein (365 aa).

The signal sequence occupies residues 1-21 (MKGKTLLAGCIALSLSHMAFA). A disulfide bond links Cys74 and Cys99.

It belongs to the leucine-binding protein family.

The protein resides in the periplasm. This protein is a component of the leucine, isoleucine, valine, threonine transport system, which is one of the two periplasmic binding protein-dependent transport systems of the high-affinity transport of the branched-chain amino acids. The protein is Leu/Ile/Val/Thr-binding protein (livJ) of Salmonella typhimurium (strain LT2 / SGSC1412 / ATCC 700720).